A 138-amino-acid polypeptide reads, in one-letter code: Protein PsiE homolog (138 aa).

Helical transmembrane passes span leucine 14–isoleucine 34, tyrosine 56–isoleucine 76, histidine 84–isoleucine 104, and alanine 109–valine 129.

Belongs to the PsiE family.

The protein localises to the cell membrane. In Bacillus velezensis (strain DSM 23117 / BGSC 10A6 / LMG 26770 / FZB42) (Bacillus amyloliquefaciens subsp. plantarum), this protein is Protein PsiE homolog.